The sequence spans 278 residues: 2-(acetamidomethylene)succinate hydrolase (278 aa).

Residues Ile41 and 106–107 (SL) contribute to the chloride site. Ser106 functions as the Nucleophile in the catalytic mechanism. Active-site residues include Asp130 and His258.

It belongs to the AB hydrolase superfamily. In terms of assembly, homodimer.

It carries out the reaction 2-(acetamidomethylene)succinate + 2 H2O + H(+) = succinate semialdehyde + acetate + NH4(+) + CO2. It participates in cofactor degradation; B6 vitamer degradation. Its function is as follows. Catalyzes the final reaction in the degradation of vitamin B6 from (E)-2-(acetamidomethylene)succinate (E-2AMS) to produce succinic semialdehyde, acetate, ammonia and carbon dioxide. The sequence is that of 2-(acetamidomethylene)succinate hydrolase from Mesorhizobium japonicum (strain LMG 29417 / CECT 9101 / MAFF 303099) (Mesorhizobium loti (strain MAFF 303099)).